Reading from the N-terminus, the 388-residue chain is Chaperone protein DnaJ (388 aa).

The J domain occupies 5 to 69 (DYYDVLGVDK…QKRAQYDQFG (65 aa)). The CR-type zinc finger occupies 145 to 227 (GKKTDITYTR…CHGQGTVDKK (83 aa)). 8 residues coordinate Zn(2+): Cys-158, Cys-161, Cys-175, Cys-178, Cys-201, Cys-204, Cys-215, and Cys-218. CXXCXGXG motif repeat units lie at residues 158–165 (CPTCDGSG), 175–182 (CDKCHGSG), 201–208 (CDKCGGRG), and 215–222 (CQTCHGQG).

It belongs to the DnaJ family. As to quaternary structure, homodimer. It depends on Zn(2+) as a cofactor.

Its subcellular location is the cytoplasm. In terms of biological role, participates actively in the response to hyperosmotic and heat shock by preventing the aggregation of stress-denatured proteins and by disaggregating proteins, also in an autonomous, DnaK-independent fashion. Unfolded proteins bind initially to DnaJ; upon interaction with the DnaJ-bound protein, DnaK hydrolyzes its bound ATP, resulting in the formation of a stable complex. GrpE releases ADP from DnaK; ATP binding to DnaK triggers the release of the substrate protein, thus completing the reaction cycle. Several rounds of ATP-dependent interactions between DnaJ, DnaK and GrpE are required for fully efficient folding. Also involved, together with DnaK and GrpE, in the DNA replication of plasmids through activation of initiation proteins. The chain is Chaperone protein DnaJ from Lactobacillus johnsonii (strain CNCM I-12250 / La1 / NCC 533).